A 2181-amino-acid polypeptide reads, in one-letter code: Non-reducing polyketide synthase dpmaA (2181 aa).

The interval 74–180 is N-terminal acylcarrier protein transacylase domain (SAT); it reads QWVKGNSTQP…LALCCGAYID (107 aa). The region spanning 347–779 is the Ketosynthase family 3 (KS3) domain; sequence QAQLLVLGPV…GTNAAMLVCQ (433 aa). Catalysis depends on for beta-ketoacyl synthase activity residues Cys-525, His-661, and His-702. Positions 891-1193 are malonyl-CoA:ACP transacylase (MAT) domain; that stretch reads VLAGQTGRRV…SFYPAALGEP (303 aa). The active-site For acyl/malonyl transferase activity is the Ser-977. Residues 1269-1401 form an N-terminal hotdog fold region; it reads VSLIGKTQNA…GVITLQEVYS (133 aa). One can recognise a PKS/mFAS DH domain in the interval 1269-1579; sequence VSLIGKTQNA…FQKIAISSLK (311 aa). Residues 1276–1573 form a product template (PT) domain region; sequence QNAGVQTVEY…TILGAKFQKI (298 aa). The segment at 1425-1579 is C-terminal hotdog fold; the sequence is SASVVQGDFI…FQKIAISSLK (155 aa). A compositionally biased stretch (polar residues) spans 1587–1603; the sequence is GVPQTSGGRTPSSSITE. Disordered stretches follow at residues 1587-1618 and 1652-1675; these read GVPQ…PIPG and ISGS…AMET. The span at 1653–1670 shows a compositional bias: low complexity; the sequence is SGSSRSTSSSPPSLESRS. The region spanning 1677–1753 is the Carrier domain; that stretch reads EITEGAGSAL…TLFHTIFPQQ (77 aa). Position 1713 is an O-(pantetheine 4'-phosphoryl)serine (Ser-1713). Positions 1982-2164 are methyltransferase (CMeT) domain; that stretch reads EFMNCLFSYN…QSGFDHIDWT (183 aa).

It participates in secondary metabolite biosynthesis; terpenoid biosynthesis. Its function is as follows. Non-reducing polyketide synthase; part of the gene cluster that mediates the biosynthesis of the diterpenoid pyrones subglutinols A and B. The first step of the pathway is the synthesis of the alpha-pyrone moiety by the polyketide synthase dpmaA via condensation of one acetyl-CoA starter unit with 3 malonyl-CoA units and 2 methylations. The alpha-pyrone is then combined with geranylgeranyl pyrophosphate (GGPP) formed by the GGPP synthase dpmaD through the action of the prenyltransferase dpmaC to yield a linear alpha-pyrone diterpenoid. Subsequent steps in the diterpenoid pyrone biosynthetic pathway involve the decalin core formation, which is initiated by the epoxidation of the C10-C11 olefin by the FAD-dependent oxidoreductase dpmaE, and is followed by a cyclization cascade catalyzed by the terpene cyclase dpmaB. The dehydrogenase dpmaF is then involved in tetrahydrofuran (THF) ring formation at the C5 unit to complete the formation of subglutinols A and B. This chain is Non-reducing polyketide synthase dpmaA, found in Metarhizium anisopliae (Entomophthora anisopliae).